We begin with the raw amino-acid sequence, 284 residues long: Short chain dehydrogenase/reductase AacuD (284 aa).

Position 37 (valine 37) interacts with NADP(+). Residues serine 166 and tyrosine 180 each act as proton donor in the active site. Residues tyrosine 180, lysine 184, and threonine 215 each coordinate NADP(+). The active-site Lowers pKa of active site Tyr is the lysine 184.

This sequence belongs to the short-chain dehydrogenases/reductases (SDR) family.

Its pathway is secondary metabolite biosynthesis. In terms of biological role, short chain dehydrogenase/reductase; part of the gene cluster that mediates the biosynthesis of the tetrahydroxanthone dimer secalonic acid D. The pathway begins with the synthesis of atrochrysone thioester by the polyketide synthase AacuL. The atrochrysone carboxyl ACP thioesterase AacuM then breaks the thioester bond and releases the atrochrysone carboxylic acid from AacuL. Atrochrysone carboxylic acid is decarboxylated by the decarboxylase AacuI, and oxidized by the anthrone oxygenase AacuG to yield emodin. Emodin is then reduced to emodin hydroquinone by a yet unidentified oxidoreductase. A-ring reduction by the short chain dehydrogenase AacuN, dehydration by the scytalone dehydratase-like protein AacuK and probable spontaneous re-oxidation, results in overall deoxygenation to chrysophanol. Baeyer-Villiger oxidation by the Baeyer-Villiger monooxygenase (BVMO) AacuH then yields monodictyphenone. Monodictyphenone is transformed into compounds with the tetrahydroxanthone skeleton via methylesterification by the methyltransferase AacuQ, followed by the action of the flavin-dependent monooxygenase AacuC, the isomerase AacuP, and the short chain dehydrogenase/reductase AacuF or AacuD. AacuF and AacuD should accept the same compound as a substrate but perform the ketoreduction with a different stereoselectivity, thus yielding blennolides B and A, respectively. In the final step of the biosynthesis, the cytochrome P450 monooxygenase AacuE accepts blennolide B and/or blennolide A to conduct the dimerization reaction to furnish the tetrahydroxanthone dimers, secalonic acids D, B, and F. The sequence is that of Short chain dehydrogenase/reductase AacuD from Aspergillus aculeatus (strain ATCC 16872 / CBS 172.66 / WB 5094).